Here is a 245-residue protein sequence, read N- to C-terminus: 8-amino-3,8-dideoxy-manno-octulosonate cytidylyltransferase (245 aa).

It belongs to the KdsB family.

The protein resides in the cytoplasm. The catalysed reaction is 8-amino-3,8-dideoxy-alpha-D-manno-octulosonate + CTP = CMP-8-amino-3,8-dideoxy-alpha-D-manno-oct-2-ulosonate + diphosphate. It participates in bacterial outer membrane biogenesis; lipopolysaccharide biosynthesis. Functionally, activates KDO8N (a required 8-carbon sugar) for incorporation into bacterial lipopolysaccharide in the Shewanella genus. The sequence is that of 8-amino-3,8-dideoxy-manno-octulosonate cytidylyltransferase from Shewanella loihica (strain ATCC BAA-1088 / PV-4).